Consider the following 328-residue polypeptide: Ribosomal RNA small subunit methyltransferase H (328 aa).

S-adenosyl-L-methionine contacts are provided by residues 37–39 (GGH), D57, F83, D104, and Q111.

The protein belongs to the methyltransferase superfamily. RsmH family.

It localises to the cytoplasm. The catalysed reaction is cytidine(1402) in 16S rRNA + S-adenosyl-L-methionine = N(4)-methylcytidine(1402) in 16S rRNA + S-adenosyl-L-homocysteine + H(+). Specifically methylates the N4 position of cytidine in position 1402 (C1402) of 16S rRNA. The polypeptide is Ribosomal RNA small subunit methyltransferase H (Neisseria meningitidis serogroup B (strain ATCC BAA-335 / MC58)).